The chain runs to 416 residues: Serine/threonine transporter SstT (416 aa).

9 helical membrane passes run 15-35, 49-69, 82-102, 141-161, 192-212, 217-237, 288-308, 330-350, and 356-376; these read SLVSQILVGLVFGILLAMFMP, VGALKAVAPLLVFVLVMAAII, ILLLYLLGTFLAAAVAVVASF, ALMDANYIGILAWAIGLGIAM, LGILGLVASTLAETGFDALFG, LVVLIGCMLFIAFVVNPIIVF, VSIPLGATINMAGAAITITVL, VVATISACGASGVAGGSLLLI, and LFGIGNDIAMQVVAVGFIIGV.

This sequence belongs to the dicarboxylate/amino acid:cation symporter (DAACS) (TC 2.A.23) family.

It is found in the cell inner membrane. It carries out the reaction L-serine(in) + Na(+)(in) = L-serine(out) + Na(+)(out). It catalyses the reaction L-threonine(in) + Na(+)(in) = L-threonine(out) + Na(+)(out). Functionally, involved in the import of serine and threonine into the cell, with the concomitant import of sodium (symport system). The sequence is that of Serine/threonine transporter SstT from Aeromonas salmonicida (strain A449).